Consider the following 196-residue polypeptide: MIYITPIAQKHFTKLLAGKKPGTQIRVFVVNPGTVHAKCNVCFCPPEEFKTSDVVIEFDLFSVHVDSVYVSFLKDAKIDVMINELDSQLTIKAPNATKECNNTRNNMNNDLLEDRVRNVLQFQINPQLELHGGSVSLIRITEDLLAVIKFYGGCNGCAMASYTIKEGIETTLKNLFPELKGVLDMTQHQHGTHSFY.

The [4Fe-4S] cluster site is built by Cys154 and Cys157.

Belongs to the NfuA family. Homodimer. It depends on [4Fe-4S] cluster as a cofactor.

Involved in iron-sulfur cluster biogenesis. Binds a 4Fe-4S cluster, can transfer this cluster to apoproteins, and thereby intervenes in the maturation of Fe/S proteins. Could also act as a scaffold/chaperone for damaged Fe/S proteins. The polypeptide is Fe/S biogenesis protein NfuA (Blochmanniella pennsylvanica (strain BPEN)).